The chain runs to 120 residues: Seripauperin-10 (120 aa).

The first 20 residues, 1–20, serve as a signal peptide directing secretion; that stretch reads MVKLTSIAAGVAAIAATASA.

This sequence belongs to the SRP1/TIP1 family. Seripauperin subfamily.

This chain is Seripauperin-10 (PAU10), found in Saccharomyces cerevisiae (strain ATCC 204508 / S288c) (Baker's yeast).